Reading from the N-terminus, the 142-residue chain is Hemoglobin subunit alpha-1 (142 aa).

The 141-residue stretch at 2–142 (LLSADDKKHI…VSSVLTSKYR (141 aa)) folds into the Globin domain. His-59 is an O2 binding site. His-88 contacts heme b.

It belongs to the globin family. As to quaternary structure, heterotetramer of two alpha chains and two beta chains. Red blood cells.

Its function is as follows. Involved in oxygen transport from the lung to the various peripheral tissues. The protein is Hemoglobin subunit alpha-1 (hba1) of Xenopus borealis (Kenyan clawed frog).